The primary structure comprises 472 residues: 7-dimethylallyltryptophan synthase hasE (472 aa).

Glu138 serves as a coordination point for L-tryptophan. Residues Arg154, Lys239, Tyr241, Lys313, Tyr315, Tyr393, Tyr460, and Tyr464 each contribute to the dimethylallyl diphosphate site.

The protein belongs to the tryptophan dimethylallyltransferase family. As to quaternary structure, homodimer.

It carries out the reaction L-tryptophan + dimethylallyl diphosphate = 7-(3-methylbut-2-enyl)-L-tryptophan + diphosphate. The catalysed reaction is an N-terminal L-tryptophanyl-L-alpha-aminoacyl-[peptide] + H2O = an N-terminal L-alpha-aminoacyl-[peptide] + L-tryptophan. It participates in secondary metabolite biosynthesis. 7-dimethylallyltryptophan synthase; part of the gene cluster that mediates the biosynthesis of hexadehydro-astechrome (HAS), a tryptophan-derived iron(III)-complex that acts as a virulence factor in infected mice. Catalyzes the prenylation of L-tryptophan at the C-7 position of the indole moiety. The enzyme is specific for dimethylallyl diphosphate (DMAPP) as prenyl donor. Also accepts D-tryptophan, typtophan-derivatives with modifications at the side chain or the indole ring, and linear and cyclic dipeptides such as H-L-Trp-L-Gly-OH or cyclo-L-Trp-L-Gly as substrates, however with lower efficiency. Also has tryptophan aminopeptidase activity towards linear peptides with a tryptophanyl moiety at the N-terminus. Dipeptides are better substrates than peptides with 3 or more amino acids. Enzymatic rate constants however are much higher for the prenyltransferase activity than for the aminopeptidase activity. Within the hexadehydro-astechrome biosyntetic pathway, hasE catalyzes the prenylation of the hasD-tethered tryptophan or the resulting tethered Trp-Ala dipeptid. The HAS biosynthesis begins with the synthesis of a tethered Trp-Ala dipeptide by the NRPS hasD. The 7-dimethylallyltryptophan synthase hasE then catalyzes the prenylation of the hasD-tethered tryptophan or the resulting tethered Trp-Ala dipeptide at the C-7 position of the indole moiety. HAS biosynthesis continues via tethered intermediates with the succesive actions of the cytochrome P450 monooxygenase hasH, the O-methyltransferase hasC, and the FAD-linked oxidoreductase hasG. The resulting O-methylated diketopiperazine is then released from hasD. Finally, three O-methylated diketopiperazine molecules assemble in a trimeric complex with Fe(III) to produce hexadehydro-astechrome. In Aspergillus fumigatus (strain CBS 144.89 / FGSC A1163 / CEA10) (Neosartorya fumigata), this protein is 7-dimethylallyltryptophan synthase hasE.